Consider the following 238-residue polypeptide: Probable transcriptional regulatory protein MGAS10750_Spy0264 (238 aa).

Belongs to the TACO1 family. YeeN subfamily.

The protein localises to the cytoplasm. This chain is Probable transcriptional regulatory protein MGAS10750_Spy0264, found in Streptococcus pyogenes serotype M4 (strain MGAS10750).